The following is a 125-amino-acid chain: DNA-directed RNA polymerase subunit omega (125 aa).

It belongs to the RNA polymerase subunit omega family. In terms of assembly, the RNAP catalytic core consists of 2 alpha, 1 beta, 1 beta' and 1 omega subunit. When a sigma factor is associated with the core the holoenzyme is formed, which can initiate transcription.

The enzyme catalyses RNA(n) + a ribonucleoside 5'-triphosphate = RNA(n+1) + diphosphate. Promotes RNA polymerase assembly. Latches the N- and C-terminal regions of the beta' subunit thereby facilitating its interaction with the beta and alpha subunits. The protein is DNA-directed RNA polymerase subunit omega of Zymomonas mobilis subsp. mobilis (strain ATCC 31821 / ZM4 / CP4).